The sequence spans 156 residues: Small ribosomal subunit protein uS7 (156 aa).

The protein belongs to the universal ribosomal protein uS7 family. Part of the 30S ribosomal subunit. Contacts proteins S9 and S11.

Functionally, one of the primary rRNA binding proteins, it binds directly to 16S rRNA where it nucleates assembly of the head domain of the 30S subunit. Is located at the subunit interface close to the decoding center, probably blocks exit of the E-site tRNA. The chain is Small ribosomal subunit protein uS7 from Lachnospira eligens (strain ATCC 27750 / DSM 3376 / VPI C15-48 / C15-B4) (Eubacterium eligens).